The chain runs to 274 residues: Penicillin-insensitive murein endopeptidase (274 aa).

An N-terminal signal peptide occupies residues 1–19 (MKKTAIALLAWFVSSASLA). 3 disulfide bridges follow: Cys-44-Cys-265, Cys-187-Cys-235, and Cys-216-Cys-223. His-110, His-113, Asp-120, Asp-147, His-150, and His-211 together coordinate Zn(2+). The tract at residues 225 to 274 (DQPLPPPGDGCGAELQSWFEPPKPGTTKPEKKTPPPLPPSCQALLDEHVL) is disordered.

Belongs to the peptidase M74 family. As to quaternary structure, dimer. Zn(2+) is required as a cofactor.

It is found in the periplasm. Functionally, murein endopeptidase that cleaves the D-alanyl-meso-2,6-diamino-pimelyl amide bond that connects peptidoglycan strands. Likely plays a role in the removal of murein from the sacculus. The protein is Penicillin-insensitive murein endopeptidase of Salmonella paratyphi A (strain AKU_12601).